The primary structure comprises 310 residues: MEIPHIPVLLNEVQEIFKNLKTGYFLDCTLGFGGHSETLLKNHPGLKFIACDQDQQALEFSKKRLKDFHNRITFIQSNFSEVLEKISHKEELRGILADIGVSSFQLDNNERGFSVNSDFLDMRMNQNSKISAYEVVNAYTKEQLTSIFKDYGELHDAHFIAEKICLERSKNLIKSAKELYQIIGKGKQNHRKISKATLAFQAIRIEVNQELKVLKDFLGYLENLKPKNCILAIISFHSLEDRIVKNFFKKWSKNCICDEKIMRCKCGNNHSLGQIITKKSISASKEELLKNSRSSCAKMRAFYFNNLDNK.

Residues 33–35 (GGH), aspartate 52, phenylalanine 79, aspartate 98, and glutamine 105 contribute to the S-adenosyl-L-methionine site.

The protein belongs to the methyltransferase superfamily. RsmH family.

It is found in the cytoplasm. It catalyses the reaction cytidine(1402) in 16S rRNA + S-adenosyl-L-methionine = N(4)-methylcytidine(1402) in 16S rRNA + S-adenosyl-L-homocysteine + H(+). Specifically methylates the N4 position of cytidine in position 1402 (C1402) of 16S rRNA. The polypeptide is Ribosomal RNA small subunit methyltransferase H (Campylobacter jejuni subsp. doylei (strain ATCC BAA-1458 / RM4099 / 269.97)).